The sequence spans 223 residues: Protein-L-isoaspartate O-methyltransferase (223 aa).

Residue Ser70 is part of the active site.

Belongs to the methyltransferase superfamily. L-isoaspartyl/D-aspartyl protein methyltransferase family.

It is found in the cytoplasm. The catalysed reaction is [protein]-L-isoaspartate + S-adenosyl-L-methionine = [protein]-L-isoaspartate alpha-methyl ester + S-adenosyl-L-homocysteine. In terms of biological role, catalyzes the methyl esterification of L-isoaspartyl residues in peptides and proteins that result from spontaneous decomposition of normal L-aspartyl and L-asparaginyl residues. It plays a role in the repair and/or degradation of damaged proteins. The sequence is that of Protein-L-isoaspartate O-methyltransferase from Methylobacillus flagellatus (strain ATCC 51484 / DSM 6875 / VKM B-1610 / KT).